A 176-amino-acid chain; its full sequence is Ribosome rescue factor SmrB (176 aa).

Residues 98-173 (LDLHGLTQKQ…GTAALLVLVE (76 aa)) form the Smr domain.

This sequence belongs to the SmrB family. As to quaternary structure, associates with collided ribosomes, but not with correctly translating polysomes.

In terms of biological role, acts as a ribosome collision sensor. Detects stalled/collided disomes (pairs of ribosomes where the leading ribosome is stalled and a second ribosome has collided with it) and endonucleolytically cleaves mRNA at the 5' boundary of the stalled ribosome. Stalled/collided disomes form a new interface (primarily via the 30S subunits) that binds SmrB. Cleaved mRNA becomes available for tmRNA ligation, leading to ribosomal subunit dissociation and rescue of stalled ribosomes. The sequence is that of Ribosome rescue factor SmrB from Yersinia enterocolitica serotype O:8 / biotype 1B (strain NCTC 13174 / 8081).